Here is a 313-residue protein sequence, read N- to C-terminus: MKWSEFSIHTTQEAVEPVCNILHEAGASGVVIEDPKDLVKEWGVHYGEIYQLNPDDYPEEGVMIKAYFPVNSFLGETIEEIKEAINGLLLYDIDLGHNKIQLVEVLEEEWATAWKKYYKPVKVSNTITIVPTWEEYEAHEDEMIIELDPGMAFGTGTHPTTVLCIQALENVIQGGESVIDVGTGSGVLSIAAAKLGASEVLGLDLDEVAVKSAQMNVKLNKVHRQVMVRQNHLLEGITGTRDVIVANILAEVIIRFVADAKAVLKPGGTFIVSGIIKRKKNDVKDALVTNGFQIEETVELEDWVAIIAKNGHE.

S-adenosyl-L-methionine contacts are provided by Thr-161, Gly-182, Asp-204, and Asn-247.

It belongs to the methyltransferase superfamily. PrmA family.

The protein resides in the cytoplasm. The catalysed reaction is L-lysyl-[protein] + 3 S-adenosyl-L-methionine = N(6),N(6),N(6)-trimethyl-L-lysyl-[protein] + 3 S-adenosyl-L-homocysteine + 3 H(+). Functionally, methylates ribosomal protein L11. The chain is Ribosomal protein L11 methyltransferase from Halalkalibacterium halodurans (strain ATCC BAA-125 / DSM 18197 / FERM 7344 / JCM 9153 / C-125) (Bacillus halodurans).